The sequence spans 938 residues: Isoleucine--tRNA ligase (938 aa).

A 'HIGH' region motif is present at residues 58-68 (PYANGSIHIGH). At Lys-183 the chain carries N6-acetyllysine. Position 561 (Glu-561) interacts with L-isoleucyl-5'-AMP. The 'KMSKS' region signature appears at 602–606 (KMSKS). Residue Lys-605 coordinates ATP. Cys-901, Cys-904, Cys-921, and Cys-924 together coordinate Zn(2+).

The protein belongs to the class-I aminoacyl-tRNA synthetase family. IleS type 1 subfamily. In terms of assembly, monomer. It depends on Zn(2+) as a cofactor.

It is found in the cytoplasm. The catalysed reaction is tRNA(Ile) + L-isoleucine + ATP = L-isoleucyl-tRNA(Ile) + AMP + diphosphate. Functionally, catalyzes the attachment of isoleucine to tRNA(Ile). As IleRS can inadvertently accommodate and process structurally similar amino acids such as valine, to avoid such errors it has two additional distinct tRNA(Ile)-dependent editing activities. One activity is designated as 'pretransfer' editing and involves the hydrolysis of activated Val-AMP. The other activity is designated 'posttransfer' editing and involves deacylation of mischarged Val-tRNA(Ile). This Escherichia coli (strain 55989 / EAEC) protein is Isoleucine--tRNA ligase.